Reading from the N-terminus, the 225-residue chain is ATP synthase F(0) complex subunit a (225 aa).

6 consecutive transmembrane segments (helical) span residues 10–30 (PSLL…ILLL), 69–89 (LILI…LLPY), 96–116 (QLSM…LIGL), 135–155 (LLIP…PIAL), 168–188 (LLIQ…PPLS), and 194–214 (VLIL…YVFV).

Belongs to the ATPase A chain family. As to quaternary structure, component of the ATP synthase complex composed at least of ATP5F1A/subunit alpha, ATP5F1B/subunit beta, ATP5MC1/subunit c (homooctomer), MT-ATP6/subunit a, MT-ATP8/subunit 8, ATP5ME/subunit e, ATP5MF/subunit f, ATP5MG/subunit g, ATP5MK/subunit k, ATP5MJ/subunit j, ATP5F1C/subunit gamma, ATP5F1D/subunit delta, ATP5F1E/subunit epsilon, ATP5PF/subunit F6, ATP5PB/subunit b, ATP5PD/subunit d, ATP5PO/subunit OSCP. ATP synthase complex consists of a soluble F(1) head domain (subunits alpha(3) and beta(3)) - the catalytic core - and a membrane F(0) domain - the membrane proton channel (subunits c, a, 8, e, f, g, k and j). These two domains are linked by a central stalk (subunits gamma, delta, and epsilon) rotating inside the F1 region and a stationary peripheral stalk (subunits F6, b, d, and OSCP). Interacts with DNAJC30; interaction is direct.

It is found in the mitochondrion inner membrane. The enzyme catalyses H(+)(in) = H(+)(out). Its function is as follows. Subunit a, of the mitochondrial membrane ATP synthase complex (F(1)F(0) ATP synthase or Complex V) that produces ATP from ADP in the presence of a proton gradient across the membrane which is generated by electron transport complexes of the respiratory chain. ATP synthase complex consist of a soluble F(1) head domain - the catalytic core - and a membrane F(1) domain - the membrane proton channel. These two domains are linked by a central stalk rotating inside the F(1) region and a stationary peripheral stalk. During catalysis, ATP synthesis in the catalytic domain of F(1) is coupled via a rotary mechanism of the central stalk subunits to proton translocation. With the subunit c (ATP5MC1), forms the proton-conducting channel in the F(0) domain, that contains two crucial half-channels (inlet and outlet) that facilitate proton movement from the mitochondrial intermembrane space (IMS) into the matrix. Protons are taken up via the inlet half-channel and released through the outlet half-channel, following a Grotthuss mechanism. The chain is ATP synthase F(0) complex subunit a from Alligator mississippiensis (American alligator).